A 417-amino-acid polypeptide reads, in one-letter code: C4-dicarboxylate transport protein (417 aa).

8 helical membrane-spanning segments follow: residues 4–26, 41–60, 72–94, 137–159, 180–202, 217–239, 285–307, and 347–369; these read IYVQ…PQIG, KLVI…ARMG, ALIY…GRLI, FIGA…TGFA, LFFG…AMGF, ALVA…GIAW, VVGL…YMTL, and FITL…AILV.

The protein belongs to the dicarboxylate/amino acid:cation symporter (DAACS) (TC 2.A.23) family.

It localises to the cell inner membrane. Its function is as follows. Responsible for the transport of dicarboxylates such as succinate, fumarate, and malate from the periplasm across the membrane. This is C4-dicarboxylate transport protein from Caulobacter vibrioides (strain ATCC 19089 / CIP 103742 / CB 15) (Caulobacter crescentus).